The following is a 445-amino-acid chain: Argininosuccinate synthase (445 aa).

ATP is bound by residues 17–25 and alanine 43; that span reads AFSGGLDTS. Tyrosine 99 provides a ligand contact to L-citrulline. Residues glycine 129 and threonine 131 each contribute to the ATP site. L-aspartate contacts are provided by threonine 131, asparagine 135, and aspartate 136. Asparagine 135 serves as a coordination point for L-citrulline. Residue aspartate 136 participates in ATP binding. L-citrulline is bound by residues arginine 139 and serine 192. Aspartate 194 contacts ATP. L-citrulline contacts are provided by threonine 201, glutamate 203, and glutamate 280.

The protein belongs to the argininosuccinate synthase family. Type 2 subfamily. Homotetramer.

It is found in the cytoplasm. The enzyme catalyses L-citrulline + L-aspartate + ATP = 2-(N(omega)-L-arginino)succinate + AMP + diphosphate + H(+). Its pathway is amino-acid biosynthesis; L-arginine biosynthesis; L-arginine from L-ornithine and carbamoyl phosphate: step 2/3. This is Argininosuccinate synthase from Rhodopseudomonas palustris (strain BisB18).